A 620-amino-acid polypeptide reads, in one-letter code: 1-deoxy-D-xylulose-5-phosphate synthase (620 aa).

Thiamine diphosphate contacts are provided by residues His80 and 121-123; that span reads GHS. Asp152 is a Mg(2+) binding site. Thiamine diphosphate-binding positions include 153 to 154, Asn181, Tyr288, and Glu370; that span reads GA. Asn181 is a binding site for Mg(2+).

Belongs to the transketolase family. DXPS subfamily. In terms of assembly, homodimer. Mg(2+) is required as a cofactor. It depends on thiamine diphosphate as a cofactor.

The catalysed reaction is D-glyceraldehyde 3-phosphate + pyruvate + H(+) = 1-deoxy-D-xylulose 5-phosphate + CO2. It participates in metabolic intermediate biosynthesis; 1-deoxy-D-xylulose 5-phosphate biosynthesis; 1-deoxy-D-xylulose 5-phosphate from D-glyceraldehyde 3-phosphate and pyruvate: step 1/1. Catalyzes the acyloin condensation reaction between C atoms 2 and 3 of pyruvate and glyceraldehyde 3-phosphate to yield 1-deoxy-D-xylulose-5-phosphate (DXP). The polypeptide is 1-deoxy-D-xylulose-5-phosphate synthase (Salmonella choleraesuis (strain SC-B67)).